The chain runs to 256 residues: NAP1-related protein 1 (256 aa).

A coiled-coil region spans residues 23–64 (IDAELVLSIEKLQEIQDDLEKINEKASDEVLEVEQKYNVIRK). A disordered region spans residues 220–256 (LTYFNNDADEEDFDGDDDGDEEGEEDDDDEEEEDGEE). Residues 226-256 (DADEEDFDGDDDGDEEGEEDDDDEEEEDGEE) are compositionally biased toward acidic residues.

Belongs to the nucleosome assembly protein (NAP) family. As to quaternary structure, can form homomeric and heteromeric protein complexes with NRP2. Binds histones H2A and H2B and associates with chromatin in vivo. As to expression, ubiquitous.

The protein resides in the cytoplasm. It is found in the nucleus. Acts as a histone H2A/H2B chaperone in nucleosome assembly, playing a critical role for the correct expression of genes involved in root proliferation and patterning. Required with NRP2 for the maintenance of cell proliferation and differentiation in postembryonic root growth. Involved in both intramolecular and intermolecular somatic homologous recombination. The polypeptide is NAP1-related protein 1 (NRP1) (Arabidopsis thaliana (Mouse-ear cress)).